Consider the following 1933-residue polypeptide: Protein TIC 214 (1933 aa).

The next 6 helical transmembrane spans lie at 18-38 (IVNS…FSIG), 60-80 (ATTG…YAPL), 87-107 (PHTI…FYTD), 128-148 (FSIQ…HFIL), 176-196 (VGWL…LVWI), and 230-250 (IFYI…PAPL). Disordered regions lie at residues 266–291 (AKGK…VGVG), 473–514 (KTKS…SRDN), 808–832 (THRE…AEDP), and 1066–1121 (ESFT…SSNA). Residues 278–289 (EEGDVEKEDEVG) are compositionally biased toward acidic residues. Polar residues predominate over residues 476–487 (SLSPEKTSGDNL). Basic and acidic residues-rich tracts occupy residues 488 to 514 (ETSR…SRDN) and 819 to 832 (DEKN…AEDP). The span at 1066–1078 (ESFTQISSPSSTN) shows a compositional bias: polar residues. The span at 1105 to 1115 (KEKKKKKRSLK) shows a compositional bias: basic residues. A helical transmembrane segment spans residues 1135-1155 (LPVYLKLFIQRIYTGIFFSII). The tract at residues 1562-1642 (NADNEKNEKK…SAESTTKKVT (81 aa)) is disordered. Basic and acidic residues predominate over residues 1564-1642 (DNEKNEKKEA…SAESTTKKVT (79 aa)).

This sequence belongs to the TIC214 family. In terms of assembly, part of the Tic complex.

The protein localises to the plastid. It localises to the chloroplast inner membrane. Involved in protein precursor import into chloroplasts. May be part of an intermediate translocation complex acting as a protein-conducting channel at the inner envelope. The sequence is that of Protein TIC 214 from Jasminum nudiflorum (Winter jasmine).